We begin with the raw amino-acid sequence, 493 residues long: MTELNKLTVADSVKGLKNKDFTSKELVNAHIKQIEKYKNLNAYVTETFDLALKQAEEADQNYAQNKARTLEGIPFAVKDLFCTKGIRTTACSNILKNFIPHYESSVTKNIFDKGGVMLGKTNMDEFAMGSTNITSCFGNVISPWKANDDNSDLVPGGSSGGSAAAVSGFMASAALGSDTGGSVRQPASFTGLVGFKPTYGRCSRYGMVSFASSLDQAGIFTRSVLDSSIMLEAMMGFDEKDSTSINAKVPELQSAIGSSMKNMKIGVPLSLGEGGIIEHDIMKMWHDTIELLKNAGAEIVDITLPHAKYGVAVYYVIAPAEAASNLSRYDGVRYGLRVEYENMTLDEMYEMTRSAGFGEEVKRRIMLGTYVLSSNCMDAYYFKAQKVRRLVANDFNNAFTKVNAILLPTAPSAAFKIGEKQNDPTIMYLNDLFTIPASLAGLPCVSVPAGLSARGLPLGMQIIGKQLDEYNVLKVASTIETGVKHIKFEPAGF.

Active-site charge relay system residues include K78 and S158. S182 functions as the Acyl-ester intermediate in the catalytic mechanism.

This sequence belongs to the amidase family. GatA subfamily. In terms of assembly, heterotrimer of A, B and C subunits.

The catalysed reaction is L-glutamyl-tRNA(Gln) + L-glutamine + ATP + H2O = L-glutaminyl-tRNA(Gln) + L-glutamate + ADP + phosphate + H(+). Its function is as follows. Allows the formation of correctly charged Gln-tRNA(Gln) through the transamidation of misacylated Glu-tRNA(Gln) in organisms which lack glutaminyl-tRNA synthetase. The reaction takes place in the presence of glutamine and ATP through an activated gamma-phospho-Glu-tRNA(Gln). The protein is Glutamyl-tRNA(Gln) amidotransferase subunit A of Rickettsia typhi (strain ATCC VR-144 / Wilmington).